Reading from the N-terminus, the 425-residue chain is TRAF family member-associated NF-kappa-B activator (425 aa).

M1 bears the N-acetylmethionine mark. The segment at 1–31 is necessary for interaction with ZC3H12A; that stretch reads MDKNIGEQLNKAYEAFRQACMDRDSAVKELQ. Residues 22–62 adopt a coiled-coil conformation; it reads DRDSAVKELQQKTENYEQRIREQQEQLSLQQTIIDKLKSQL. Residues 70–191 form a necessary for interaction with TRAF6 region; the sequence is DNNYGCVPLL…QCTDKTDKQE (122 aa). S126 and S129 each carry phosphoserine. An interaction with TBK1 and IKBKE region spans residues 133-172; the sequence is HERGNIEKTFWDLKEEFHKICMLAKAQKDHLSKLNIPDTA. The segment at 172–191 is TRAF family member interaction; that stretch reads ATETQCSVPIQCTDKTDKQE. Phosphoserine occurs at positions 178 and 208. The residue at position 213 (T213) is a Phosphothreonine. Residues S225, S228, S341, S354, and S357 each carry the phosphoserine modification. The UBZ1-type zinc-finger motif lies at 393–420; that stretch reads PRVCEFCQAVFPPSITSRGDFLRHLNSH. Zn(2+) is bound by residues C396, C399, H416, and H420.

In terms of assembly, homodimer. Found in a deubiquitination complex with TANK, USP10 and ZC3H12A; this complex inhibits genotoxic stress- or interleukin-1-beta-mediated NF-kappaB activation by promoting IKBKG or TRAF6 deubiquitination. Interacts with IKBKG; this interaction increases in response to DNA damage. Interacts with TRAF6; this interaction increases in response to DNA damage and recruits USP10 to the ubiquitinated TRAF6. Interacts with USP10; this interaction increases in response to DNA damage. Interacts with ZC3H12A; this interaction increases in response to DNA damage. Interacts with TBK1. Interacts with IKBKE. Also interacts with TRAF1, TRAF2, and TRAF3 by binding to their TRAF-C domains; the interaction with TRAF2 is disrupted by the phosphorylation of TANK by IKBKE. Interacts more strongly with TRAF1 and TRAF2 than TRAF3. Interacts with IKBKG; the interaction is enhanced by IKBKE and TBK1. Part of a ternary complex consisting of TANK, IKBKB and IKBKG. (Microbial infection) Interacts with vaccinia virus protein C6. As to quaternary structure, (Microbial infection) Interacts with Seneca Valley virus protease 3C; this interaction allows the cleavage of TANK and subsequent suppression of host innate immunity. Post-translationally, phosphorylated by IKBKE. (Microbial infection) Cleaved by encephalomyocarditis virus (EMCV) protease 3C. This cleavage allows the virus to disrupt the TANK-TBK1-IKKepsilon-IRF3 complex, thereby inhibiting the induction of the IFN-beta signal pathway. In terms of processing, (Microbial infection) Cleaved by Seneca Valley virus protease 3C allowing the virus to suppress interferon type-I through both RIG-I and Toll-like receptor-dependent pathways. As to expression, ubiquitous.

The protein resides in the cytoplasm. In terms of biological role, adapter protein involved in I-kappa-B-kinase (IKK) regulation which constitutively binds TBK1 and IKBKE playing a role in antiviral innate immunity. Acts as a regulator of TRAF function by maintaining them in a latent state. Blocks TRAF2 binding to LMP1 and inhibits LMP1-mediated NF-kappa-B activation. Negatively regulates NF-kappaB signaling and cell survival upon DNA damage. Plays a role as an adapter to assemble ZC3H12A, USP10 in a deubiquitination complex which plays a negative feedback response to attenuate NF-kappaB activation through the deubiquitination of IKBKG or TRAF6 in response to interleukin-1-beta (IL1B) stimulation or upon DNA damage. Promotes UBP10-induced deubiquitination of TRAF6 in response to DNA damage. May control negatively TRAF2-mediated NF-kappa-B activation signaled by CD40, TNFR1 and TNFR2. The protein is TRAF family member-associated NF-kappa-B activator (TANK) of Homo sapiens (Human).